A 239-amino-acid chain; its full sequence is Orotidine 5'-phosphate decarboxylase (239 aa).

Substrate contacts are provided by residues Asp-10, Lys-32, 59–68 (DLKLHDIPNT), Thr-122, Arg-184, Gln-193, Gly-213, and Arg-214. The active-site Proton donor is Lys-61.

The protein belongs to the OMP decarboxylase family. Type 1 subfamily. Homodimer.

It catalyses the reaction orotidine 5'-phosphate + H(+) = UMP + CO2. Its pathway is pyrimidine metabolism; UMP biosynthesis via de novo pathway; UMP from orotate: step 2/2. In terms of biological role, catalyzes the decarboxylation of orotidine 5'-monophosphate (OMP) to uridine 5'-monophosphate (UMP). The sequence is that of Orotidine 5'-phosphate decarboxylase from Shouchella clausii (strain KSM-K16) (Alkalihalobacillus clausii).